Consider the following 265-residue polypeptide: Protein synthesis inhibitor PD-S2 (265 aa).

Cystine bridges form between Cys34-Cys262 and Cys88-Cys110. Asn120 carries N-linked (GlcNAc...) asparagine glycosylation.

This sequence belongs to the ribosome-inactivating protein family. Type 1 RIP subfamily. Glycosylated. Seeds.

It carries out the reaction Endohydrolysis of the N-glycosidic bond at one specific adenosine on the 28S rRNA.. Inhibits protein synthesis in animal cells. Useful as immunotoxin for pharmacological applications. This is Protein synthesis inhibitor PD-S2 from Phytolacca dioica (Bella sombra tree).